The following is a 428-amino-acid chain: Gamma-glutamyl phosphate reductase (428 aa).

This sequence belongs to the gamma-glutamyl phosphate reductase family.

The protein localises to the cytoplasm. The enzyme catalyses L-glutamate 5-semialdehyde + phosphate + NADP(+) = L-glutamyl 5-phosphate + NADPH + H(+). Its pathway is amino-acid biosynthesis; L-proline biosynthesis; L-glutamate 5-semialdehyde from L-glutamate: step 2/2. In terms of biological role, catalyzes the NADPH-dependent reduction of L-glutamate 5-phosphate into L-glutamate 5-semialdehyde and phosphate. The product spontaneously undergoes cyclization to form 1-pyrroline-5-carboxylate. This Zymomonas mobilis subsp. mobilis (strain ATCC 31821 / ZM4 / CP4) protein is Gamma-glutamyl phosphate reductase.